Reading from the N-terminus, the 130-residue chain is MAFLPKFDSAGLVTCVTTDAVSGDVLMVAHMNDEALRKTIATGEAWYFSRSRNALWRKGESSGQTQRVVEMRTDCDQDAVWLRVEQRGAACHTGRHSCFYRKVEMAGEGGARLVFVDADRLFDPAAVYRK.

Residue Asp74 participates in Mg(2+) binding. A Zn(2+)-binding site is contributed by Cys75. Residues Asp76 and Asp78 each contribute to the Mg(2+) site. Positions 91 and 98 each coordinate Zn(2+).

This sequence belongs to the PRA-CH family. As to quaternary structure, homodimer. Requires Mg(2+) as cofactor. Zn(2+) serves as cofactor.

It is found in the cytoplasm. It catalyses the reaction 1-(5-phospho-beta-D-ribosyl)-5'-AMP + H2O = 1-(5-phospho-beta-D-ribosyl)-5-[(5-phospho-beta-D-ribosylamino)methylideneamino]imidazole-4-carboxamide. It participates in amino-acid biosynthesis; L-histidine biosynthesis; L-histidine from 5-phospho-alpha-D-ribose 1-diphosphate: step 3/9. In terms of biological role, catalyzes the hydrolysis of the adenine ring of phosphoribosyl-AMP. In Bradyrhizobium sp. (strain ORS 278), this protein is Phosphoribosyl-AMP cyclohydrolase.